The sequence spans 329 residues: GTP 3',8-cyclase (329 aa).

One can recognise a Radical SAM core domain in the interval 8–234 (AFARKFFYLR…QIRQRSDGPA (227 aa)). A GTP-binding site is contributed by Arg17. Positions 24 and 28 each coordinate [4Fe-4S] cluster. Residue Tyr30 coordinates S-adenosyl-L-methionine. Residue Cys31 participates in [4Fe-4S] cluster binding. A GTP-binding site is contributed by Arg68. An S-adenosyl-L-methionine-binding site is contributed by Gly72. Thr99 contacts GTP. Ser123 provides a ligand contact to S-adenosyl-L-methionine. Lys160 serves as a coordination point for GTP. Met194 provides a ligand contact to S-adenosyl-L-methionine. Positions 257 and 260 each coordinate [4Fe-4S] cluster. 262-264 (RLR) lines the GTP pocket. Cys274 is a binding site for [4Fe-4S] cluster.

This sequence belongs to the radical SAM superfamily. MoaA family. Monomer and homodimer. Requires [4Fe-4S] cluster as cofactor.

It catalyses the reaction GTP + AH2 + S-adenosyl-L-methionine = (8S)-3',8-cyclo-7,8-dihydroguanosine 5'-triphosphate + 5'-deoxyadenosine + L-methionine + A + H(+). Its pathway is cofactor biosynthesis; molybdopterin biosynthesis. Catalyzes the cyclization of GTP to (8S)-3',8-cyclo-7,8-dihydroguanosine 5'-triphosphate. This Klebsiella pneumoniae (strain 342) protein is GTP 3',8-cyclase.